Consider the following 386-residue polypeptide: ABC transporter permease protein NatB (386 aa).

Transmembrane regions (helical) follow at residues 19–39 (TILLTILVPMIMMLGLVFFYE), 172–192 (AIMLSAILPMLILTSIVSGAM), 226–246 (WLAVSTFGVASGVFALVFLIL), 273–293 (ALIIVLSALLISAMELFISIM), 300–320 (AQSYMSLVVFLPVFPMFFIFS), and 353–373 (ATILSTSGTIAVLIAIFFLLA).

The complex is composed of NatA and NatB.

It is found in the cell membrane. The enzyme catalyses Na(+)(in) + ATP + H2O = Na(+)(out) + ADP + phosphate + H(+). Functionally, part of an ABC transporter that catalyzes ATP-dependent electrogenic sodium extrusion. The protein is ABC transporter permease protein NatB of Bacillus subtilis (strain 168).